Consider the following 448-residue polypeptide: UDP-N-acetylmuramoylalanine--D-glutamate ligase (448 aa).

116–122 (GSNAKST) provides a ligand contact to ATP.

This sequence belongs to the MurCDEF family.

Its subcellular location is the cytoplasm. The catalysed reaction is UDP-N-acetyl-alpha-D-muramoyl-L-alanine + D-glutamate + ATP = UDP-N-acetyl-alpha-D-muramoyl-L-alanyl-D-glutamate + ADP + phosphate + H(+). It functions in the pathway cell wall biogenesis; peptidoglycan biosynthesis. In terms of biological role, cell wall formation. Catalyzes the addition of glutamate to the nucleotide precursor UDP-N-acetylmuramoyl-L-alanine (UMA). This Pseudomonas fluorescens (strain Pf0-1) protein is UDP-N-acetylmuramoylalanine--D-glutamate ligase.